The sequence spans 205 residues: Recombination protein RecR (205 aa).

The segment at 59-74 adopts a C4-type zinc-finger fold; it reads CARCNTFCEGGLCDIC. In terms of domain architecture, Toprim spans 82–177; the sequence is RRLMVVHMPA…KVSRLSQGIP (96 aa).

It belongs to the RecR family.

In terms of biological role, may play a role in DNA repair. It seems to be involved in an RecBC-independent recombinational process of DNA repair. It may act with RecF and RecO. This chain is Recombination protein RecR, found in Neisseria gonorrhoeae (strain ATCC 700825 / FA 1090).